A 523-amino-acid polypeptide reads, in one-letter code: Major facilitator-type transporter psiT2 (523 aa).

Residues 1–26 (MSLERSTSPNPTERTSLLSDTASTIS) are compositionally biased toward polar residues. The interval 1–45 (MSLERSTSPNPTERTSLLSDTASTISSRDDVEQSSLKQRRTPIPT) is disordered. 5 helical membrane passes run 88 to 108 (FYSG…IFML), 125 to 145 (ALGI…TMML), 149 to 169 (VCAG…SELT), 175 to 195 (ALVV…GPLI), and 221 to 241 (FLPS…GYFF). The N-linked (GlcNAc...) asparagine glycan is linked to asparagine 269. Helical transmembrane passes span 317–337 (FLMF…FTAV), 352–372 (AFSV…PWVL), and 382–402 (HFCM…NPLA). The N-linked (GlcNAc...) asparagine glycan is linked to asparagine 410. 3 helical membrane passes run 419-439 (GLLY…VMAF), 455-474 (LATA…AFCP), and 488-508 (NILG…VGVW).

It belongs to the major facilitator superfamily. TCR/Tet family.

It is found in the membrane. In terms of biological role, major facilitator-type transporter; part of the gene cluster that mediates the biosynthesis of psilocybin, a psychotropic tryptamine-derived natural product. This chain is Major facilitator-type transporter psiT2, found in Psilocybe cubensis (Psychedelic mushroom).